The following is a 694-amino-acid chain: DNA polymerase eta (694 aa).

The 250-residue stretch at 9 to 258 (VALVDMDCFF…MPIRKIRSLG (250 aa)) folds into the UmuC domain. The Mg(2+) site is built by D13 and M14. The Mn(2+) site is built by D13 and M14. R61 is a binding site for a 2'-deoxyribonucleoside 5'-triphosphate. D115 and E116 together coordinate Mg(2+). Residues D115 and E116 each contribute to the Mn(2+) site. E116 is an active-site residue. The tract at residues 565–598 (DSGPDDGAVKPVSSKAVSTEMNVAGDSPNVLDSP) is disordered. Residues 609 to 643 (ATEDQVLCEKCDSLVPVWDMPEHTDYHFALELQKS) form a UBZ3-type zinc finger. The Zn(2+) site is built by C616, C619, H631, and H635. Residues 651-694 (KPQAIPAVSPQGKRNPKSPSASSSKRLRPHGMQTLESFFKPLTH) form a disordered region. Residues K663, K667, and K675 each participate in a glycyl lysine isopeptide (Lys-Gly) (interchain with G-Cter in ubiquitin) cross-link. Residues 682–689 (MQTLESFF) carry the PIP-box motif. Residue K690 forms a Glycyl lysine isopeptide (Lys-Gly) (interchain with G-Cter in ubiquitin) linkage.

This sequence belongs to the DNA polymerase type-Y family. As to quaternary structure, interacts with REV1. Interacts with monoubiquitinated PCNA, but not unmodified PCNA. Interacts with POLI; this interaction targets POLI to the replication machinery. Interacts with PALB2 and BRCA2; the interactions are direct and are required to sustain the recruitment of POLH at blocked replication forks and to stimulate POLH-dependent DNA synthesis on D loop substrates. Interacts (via C-terminus) with TRAIP. Interacts with ubiquitin. Interacts with POLDIP2. Mg(2+) serves as cofactor. Mn(2+) is required as a cofactor. Post-translationally, monoubiquitinated by RCHY1/PIRH2. Ubiquitination depends on integrity of the UBZ3-type zinc finger domain and is enhanced by TRAIP. Ubiquitination inhibits the ability of PolH to interact with PCNA and to bypass UV-induced lesions. As to expression, ubiquitous.

The protein localises to the nucleus. It carries out the reaction DNA(n) + a 2'-deoxyribonucleoside 5'-triphosphate = DNA(n+1) + diphosphate. With respect to regulation, the enzyme in complex with the DNA substrate binds a third divalent metal cation. The binding of this third divalent cation, which is coordinated by water molecules and two oxygen atoms from DNA and dNTP, is essential for catalyzing the DNA synthesis. Functionally, DNA polymerase specifically involved in the DNA repair by translesion synthesis (TLS). Due to low processivity on both damaged and normal DNA, cooperates with the heterotetrameric (REV3L, REV7, POLD2 and POLD3) POLZ complex for complete bypass of DNA lesions. Inserts one or 2 nucleotide(s) opposite the lesion, the primer is further extended by the tetrameric POLZ complex. In the case of 1,2-intrastrand d(GpG)-cisplatin cross-link, inserts dCTP opposite the 3' guanine. Particularly important for the repair of UV-induced pyrimidine dimers. Although inserts the correct base, may cause base transitions and transversions depending upon the context. May play a role in hypermutation at immunoglobulin genes. Forms a Schiff base with 5'-deoxyribose phosphate at abasic sites, but does not have any lyase activity, preventing the release of the 5'-deoxyribose phosphate (5'-dRP) residue. This covalent trapping of the enzyme by the 5'-dRP residue inhibits its DNA synthetic activity during base excision repair, thereby avoiding high incidence of mutagenesis. Targets POLI to replication foci. This Mus musculus (Mouse) protein is DNA polymerase eta (Polh).